Reading from the N-terminus, the 214-residue chain is Adenylate kinase (214 aa).

Residue 15-20 (GAGKGT) participates in ATP binding. The NMP stretch occupies residues 35–64 (ASGDLFREAIKNQSVIGRKIAAIISQGGYV). AMP-binding positions include S36, R41, 62–64 (GYV), 90–93 (GYPR), and Q97. An LID region spans residues 127 to 164 (NRVICNNCNSVYNLLFQKPLVENSCDQCSAKLVKRSDD). Residue R128 coordinates ATP. Zn(2+) is bound by residues C131 and C134. 137 to 138 (VY) lines the ATP pocket. Zn(2+)-binding residues include C151 and C154. AMP is bound by residues R161 and R172. Residue L200 coordinates ATP.

This sequence belongs to the adenylate kinase family. Monomer.

The protein localises to the cytoplasm. The enzyme catalyses AMP + ATP = 2 ADP. It functions in the pathway purine metabolism; AMP biosynthesis via salvage pathway; AMP from ADP: step 1/1. Its function is as follows. Catalyzes the reversible transfer of the terminal phosphate group between ATP and AMP. Plays an important role in cellular energy homeostasis and in adenine nucleotide metabolism. The chain is Adenylate kinase from Mycoplasma genitalium (strain ATCC 33530 / DSM 19775 / NCTC 10195 / G37) (Mycoplasmoides genitalium).